The following is a 107-amino-acid chain: Thioredoxin 1 (107 aa).

One can recognise a Thioredoxin domain in the interval 2–107 (SVAAAVTDAT…TLANTLDKHL (106 aa)). The cysteines at positions 32 and 35 are disulfide-linked.

It belongs to the thioredoxin family.

In terms of biological role, participates in various redox reactions through the reversible oxidation of its active center dithiol to a disulfide and catalyzes dithiol-disulfide exchange reactions. This chain is Thioredoxin 1 (trxA), found in Synechococcus elongatus (strain ATCC 33912 / PCC 7942 / FACHB-805) (Anacystis nidulans R2).